We begin with the raw amino-acid sequence, 307 residues long: Ribosomal RNA small subunit methyltransferase H (307 aa).

S-adenosyl-L-methionine-binding positions include 32 to 34 (GGH), Asp52, Phe78, Asp99, and Gln106.

Belongs to the methyltransferase superfamily. RsmH family.

The protein localises to the cytoplasm. The enzyme catalyses cytidine(1402) in 16S rRNA + S-adenosyl-L-methionine = N(4)-methylcytidine(1402) in 16S rRNA + S-adenosyl-L-homocysteine + H(+). Functionally, specifically methylates the N4 position of cytidine in position 1402 (C1402) of 16S rRNA. The polypeptide is Ribosomal RNA small subunit methyltransferase H (Acinetobacter baumannii (strain AB0057)).